A 141-amino-acid chain; its full sequence is Cytochrome c-type biogenesis protein CcmE (141 aa).

The Cytoplasmic segment spans residues 1–7 (MRARTRR). The chain crosses the membrane as a helical; Signal-anchor for type II membrane protein span at residues 8 to 28 (LYTFGIAAALIVAAAALAFFA). The Periplasmic segment spans residues 29 to 141 (LRENANLFYT…RELKPLEAGG (113 aa)). Positions 125 and 129 each coordinate heme.

This sequence belongs to the CcmE/CycJ family.

The protein localises to the cell inner membrane. Its function is as follows. Heme chaperone required for the biogenesis of c-type cytochromes. Transiently binds heme delivered by CcmC and transfers the heme to apo-cytochromes in a process facilitated by CcmF and CcmH. The polypeptide is Cytochrome c-type biogenesis protein CcmE (Hyphomonas neptunium (strain ATCC 15444)).